The sequence spans 240 residues: tRNA (guanine-N(1)-)-methyltransferase (240 aa).

S-adenosyl-L-methionine contacts are provided by residues Gly-108 and 127–132 (LGDYIL).

Belongs to the RNA methyltransferase TrmD family. In terms of assembly, homodimer.

It localises to the cytoplasm. It catalyses the reaction guanosine(37) in tRNA + S-adenosyl-L-methionine = N(1)-methylguanosine(37) in tRNA + S-adenosyl-L-homocysteine + H(+). Specifically methylates guanosine-37 in various tRNAs. This is tRNA (guanine-N(1)-)-methyltransferase from Streptococcus sanguinis (strain SK36).